The sequence spans 344 residues: Heat-inducible transcription repressor HrcA (344 aa).

Belongs to the HrcA family.

Negative regulator of class I heat shock genes (grpE-dnaK-dnaJ and groELS operons). Prevents heat-shock induction of these operons. This Streptococcus equi subsp. zooepidemicus (strain H70) protein is Heat-inducible transcription repressor HrcA.